A 40-amino-acid chain; its full sequence is Large ribosomal subunit protein bL36A (40 aa).

The protein belongs to the bacterial ribosomal protein bL36 family.

In Kineococcus radiotolerans (strain ATCC BAA-149 / DSM 14245 / SRS30216), this protein is Large ribosomal subunit protein bL36A.